Consider the following 1382-residue polypeptide: DNA-directed RNA polymerase subunit beta (1382 aa).

Belongs to the RNA polymerase beta chain family. The RNAP catalytic core consists of 2 alpha, 1 beta, 1 beta' and 1 omega subunit. When a sigma factor is associated with the core the holoenzyme is formed, which can initiate transcription.

The enzyme catalyses RNA(n) + a ribonucleoside 5'-triphosphate = RNA(n+1) + diphosphate. In terms of biological role, DNA-dependent RNA polymerase catalyzes the transcription of DNA into RNA using the four ribonucleoside triphosphates as substrates. The sequence is that of DNA-directed RNA polymerase subunit beta from Aliarcobacter butzleri (strain RM4018) (Arcobacter butzleri).